Consider the following 491-residue polypeptide: MTQAKDVALIFELSKQGRVGHSLPNLDIEEQPLESLLPEAYVREEEPELPEVSELQIMRHYTALSKRNHGVDSGFYPLGSCTMKYNPKINEDIARLPGLVHVHPYQPEEQVQGSLKMLYSLQTALAEITGMDEVTLQPAAGAHGEWTGLMMIRAYHEANGDKKRTKVVVPDSAHGTNPASATVAGFESVTVRTNEAGLVDLDHLREVVNEETAALMLTNPNTLGLFEADIQEMADIIHRAGGKLYYDGANSNAILGIARPGDMGFDVVHLNLHKTFTGPHGGGGPGSGPVGVKKELVPFLPKPVLVNDDGFFRFDSDRPQSIGRVKPYYGNYGINLRAYTYIRTMGPDGLRQVSENAVLNANYMMRRLESYYDLPYAQHCKHEFVLSGKRQKKLGVRTLDIAKRLLDFGYHPPTIYFPLNVEECMMIEPTETESKETLDEFIEAMIQIAKEAEESPELVQEAPHHTVIKRLDETLAARKPILRYEMKKETV.

Position 274 is an N6-(pyridoxal phosphate)lysine (K274).

The protein belongs to the GcvP family. C-terminal subunit subfamily. The glycine cleavage system is composed of four proteins: P, T, L and H. In this organism, the P 'protein' is a heterodimer of two subunits. Pyridoxal 5'-phosphate serves as cofactor.

It catalyses the reaction N(6)-[(R)-lipoyl]-L-lysyl-[glycine-cleavage complex H protein] + glycine + H(+) = N(6)-[(R)-S(8)-aminomethyldihydrolipoyl]-L-lysyl-[glycine-cleavage complex H protein] + CO2. The glycine cleavage system catalyzes the degradation of glycine. The P protein binds the alpha-amino group of glycine through its pyridoxal phosphate cofactor; CO(2) is released and the remaining methylamine moiety is then transferred to the lipoamide cofactor of the H protein. In Shouchella clausii (strain KSM-K16) (Alkalihalobacillus clausii), this protein is Probable glycine dehydrogenase (decarboxylating) subunit 2.